Reading from the N-terminus, the 134-residue chain is Profilin-2 (134 aa).

C13 and C118 form a disulfide bridge. Residues 84–100 (AVIRGKKGSGGITIKKT) carry the Involved in PIP2 interaction motif. Position 114 is a phosphothreonine (T114).

This sequence belongs to the profilin family. As to quaternary structure, occurs in many kinds of cells as a complex with monomeric actin in a 1:1 ratio. Post-translationally, phosphorylated by MAP kinases.

Its subcellular location is the cytoplasm. The protein localises to the cytoskeleton. Its function is as follows. Binds to actin and affects the structure of the cytoskeleton. At high concentrations, profilin prevents the polymerization of actin, whereas it enhances it at low concentrations. The chain is Profilin-2 from Olea europaea (Common olive).